The following is a 311-amino-acid chain: tRNA-cytidine(32) 2-sulfurtransferase (311 aa).

Residues 47–52 (SGGKDS) carry the PP-loop motif motif. [4Fe-4S] cluster contacts are provided by cysteine 122, cysteine 125, and cysteine 213.

This sequence belongs to the TtcA family. In terms of assembly, homodimer. It depends on Mg(2+) as a cofactor. [4Fe-4S] cluster is required as a cofactor.

It is found in the cytoplasm. The catalysed reaction is cytidine(32) in tRNA + S-sulfanyl-L-cysteinyl-[cysteine desulfurase] + AH2 + ATP = 2-thiocytidine(32) in tRNA + L-cysteinyl-[cysteine desulfurase] + A + AMP + diphosphate + H(+). It functions in the pathway tRNA modification. In terms of biological role, catalyzes the ATP-dependent 2-thiolation of cytidine in position 32 of tRNA, to form 2-thiocytidine (s(2)C32). The sulfur atoms are provided by the cysteine/cysteine desulfurase (IscS) system. The chain is tRNA-cytidine(32) 2-sulfurtransferase from Escherichia coli O81 (strain ED1a).